The chain runs to 215 residues: Probable nicotinate-nucleotide adenylyltransferase (215 aa).

This sequence belongs to the NadD family.

The catalysed reaction is nicotinate beta-D-ribonucleotide + ATP + H(+) = deamido-NAD(+) + diphosphate. It participates in cofactor biosynthesis; NAD(+) biosynthesis; deamido-NAD(+) from nicotinate D-ribonucleotide: step 1/1. Catalyzes the reversible adenylation of nicotinate mononucleotide (NaMN) to nicotinic acid adenine dinucleotide (NaAD). This Coxiella burnetii (strain Dugway 5J108-111) protein is Probable nicotinate-nucleotide adenylyltransferase.